We begin with the raw amino-acid sequence, 508 residues long: Maturase K (508 aa).

It belongs to the intron maturase 2 family. MatK subfamily.

Its subcellular location is the plastid. The protein localises to the chloroplast. In terms of biological role, usually encoded in the trnK tRNA gene intron. Probably assists in splicing its own and other chloroplast group II introns. In Ranunculus glacialis (Glacier buttercup), this protein is Maturase K.